Here is a 508-residue protein sequence, read N- to C-terminus: Replication factor C large subunit (508 aa).

Position 43–50 (43–50 (GSPGIGKT)) interacts with ATP. A disordered region spans residues 425 to 508 (AVEHSGGVFE…DQQSGLSDFM (84 aa)). Acidic residues-rich tracts occupy residues 443 to 461 (GDSD…EESG) and 483 to 500 (TTDD…DDDQ).

This sequence belongs to the activator 1 small subunits family. RfcL subfamily. In terms of assembly, heteromultimer composed of small subunits (RfcS) and large subunits (RfcL).

In terms of biological role, part of the RFC clamp loader complex which loads the PCNA sliding clamp onto DNA. The polypeptide is Replication factor C large subunit (Haloarcula marismortui (strain ATCC 43049 / DSM 3752 / JCM 8966 / VKM B-1809) (Halobacterium marismortui)).